A 507-amino-acid polypeptide reads, in one-letter code: Probable Xaa-Pro aminopeptidase HCAG_02413 (507 aa).

Mn(2+) contacts are provided by aspartate 283, aspartate 294, glutamate 431, and glutamate 469.

This sequence belongs to the peptidase M24B family. Mn(2+) is required as a cofactor.

The catalysed reaction is Release of any N-terminal amino acid, including proline, that is linked to proline, even from a dipeptide or tripeptide.. Its function is as follows. Catalyzes the removal of a penultimate prolyl residue from the N-termini of peptides. This chain is Probable Xaa-Pro aminopeptidase HCAG_02413, found in Ajellomyces capsulatus (strain NAm1 / WU24) (Darling's disease fungus).